Here is an 85-residue protein sequence, read N- to C-terminus: Small ribosomal subunit protein uS17 (85 aa).

It belongs to the universal ribosomal protein uS17 family. In terms of assembly, part of the 30S ribosomal subunit.

One of the primary rRNA binding proteins, it binds specifically to the 5'-end of 16S ribosomal RNA. In Pasteurella multocida (strain Pm70), this protein is Small ribosomal subunit protein uS17.